The sequence spans 306 residues: Heme A synthase (306 aa).

The Cytoplasmic segment spans residues 1 to 5 (MKALR). Residues 6-26 (AVSLANTAVMLLAVLWGAWVT) traverse the membrane as a helical segment. The Extracellular portion of the chain corresponds to 27 to 56 (SSDSGDGCGASWPLCKGTFMPDWDYAAIVE). An intrachain disulfide couples Cys-34 to Cys-41. The active site involves Glu-56. Residues 57–77 (FGHRVVSALAGLLSVAVLVWV) form a helical membrane-spanning segment. His-59 is a heme o binding site. Residues 78–89 (ARVRPSETRLKR) are Cytoplasmic-facing. A helical transmembrane segment spans residues 90–110 (LAFGTFFFVVLQGGLGAAAVL). Residues 111-116 (RPQPDL) are Extracellular-facing. A helical transmembrane segment spans residues 117–137 (VMALHFGFSLLCFTFALLVTV). His-121 contacts heme o. Residues 138-164 (ALGQGERAAFQRPDVSAQPVAPGLRTQ) lie on the Cytoplasmic side of the membrane. Residues 165-185 (IWGLAVYTYLVVYLGAYVRHL) form a helical membrane-spanning segment. The Extracellular portion of the chain corresponds to 186–206 (GASMACTGWPLCNGELIPPLY). Cys-191 and Cys-197 are joined by a disulfide. Residues 207–227 (GPVGANFAHRLGAALAVVLVL) form a helical membrane-spanning segment. Residue His-215 coordinates heme b. The Cytoplasmic portion of the chain corresponds to 228-247 (RLWWTARRLTERDDLRRGAA). A helical transmembrane segment spans residues 248–268 (WALALMAAQVASGALFPLGYL). At 269-277 (NLLTQLLHT) the chain is on the extracellular side. Residue His-276 coordinates heme b. A helical membrane pass occupies residues 278 to 298 (GLITGFWGVLSYLCYLTLPVG). Topologically, residues 299-306 (RETVAVSA) are cytoplasmic.

The protein belongs to the COX15/CtaA family. Type 1 subfamily. As to quaternary structure, interacts with CtaB. The cofactor is heme b.

The protein localises to the cell membrane. The catalysed reaction is Fe(II)-heme o + 2 A + H2O = Fe(II)-heme a + 2 AH2. It participates in porphyrin-containing compound metabolism; heme A biosynthesis; heme A from heme O: step 1/1. In terms of biological role, catalyzes the conversion of heme O to heme A by two successive hydroxylations of the methyl group at C8. The first hydroxylation forms heme I, the second hydroxylation results in an unstable dihydroxymethyl group, which spontaneously dehydrates, resulting in the formyl group of heme A. This Symbiobacterium thermophilum (strain DSM 24528 / JCM 14929 / IAM 14863 / T) protein is Heme A synthase.